Here is a 714-residue protein sequence, read N- to C-terminus: Calpain-1 catalytic subunit (714 aa).

In terms of domain architecture, Calpain catalytic spans 55–354 (LFRDEAFPPV…FTRLEICNLT (300 aa)). Residues Gln109 and Asp114 each coordinate Ca(2+). Catalysis depends on residues Cys115, His272, and Asn296. The Ca(2+) site is built by Ser316, Asp318, and Glu323. Thr354 is modified (phosphothreonine). A domain III region spans residues 355-526 (PDALKSRTIR…KSAGTAELDD (172 aa)). Residues 527–542 (QIQANLPDEQVLSEEE) are linker. 4 EF-hand domains span residues 541–576 (EEID…IISK), 585–618 (FSLE…NRIR), 615–650 (NRIR…AGFK), and 680–714 (VRLE…TMFA). A domain IV region spans residues 543–713 (IDENFKALFR…LFKWLQLTMF (171 aa)). Ca(2+) contacts are provided by Asp598, Asp600, Asn602, Lys604, Glu609, Asp628, Asp630, Ser632, Ser634, and Glu639.

It belongs to the peptidase C2 family. In terms of assembly, forms a heterodimer with a small (regulatory) subunit (CAPNS1). It depends on Ca(2+) as a cofactor. Post-translationally, undergoes calcium-induced successive autoproteolytic cleavages that generate a membrane-bound 78 kDa active form and an intracellular 75 kDa active form. Calpastatin reduces with high efficiency the transition from 78 kDa to 75 kDa calpain forms. As to expression, ubiquitous.

The protein resides in the cytoplasm. Its subcellular location is the cell membrane. It carries out the reaction Broad endopeptidase specificity.. Activated by micromolar concentrations of calcium and inhibited by calpastatin. Functionally, calcium-regulated non-lysosomal thiol-protease which catalyze limited proteolysis of substrates involved in cytoskeletal remodeling and signal transduction. Proteolytically cleaves CTBP1. Cleaves and activates caspase-7 (CASP7). The polypeptide is Calpain-1 catalytic subunit (CAPN1) (Macaca fascicularis (Crab-eating macaque)).